Consider the following 295-residue polypeptide: Tyrosine recombinase XerC (295 aa).

One can recognise a Core-binding (CB) domain in the interval 1-85 (MQNALQKYYD…ALRQFLAYLV (85 aa)). The 180-residue stretch at 106 to 285 (YLPKNIDQEQ…DFKHLTDVYD (180 aa)) folds into the Tyr recombinase domain. Active-site residues include Arg-145, Lys-169, His-237, Arg-240, and His-263. Residue Tyr-272 is the O-(3'-phospho-DNA)-tyrosine intermediate of the active site.

Belongs to the 'phage' integrase family. XerC subfamily. Forms a cyclic heterotetrameric complex composed of two molecules of XerC and two molecules of XerD.

It localises to the cytoplasm. Its function is as follows. Site-specific tyrosine recombinase, which acts by catalyzing the cutting and rejoining of the recombining DNA molecules. The XerC-XerD complex is essential to convert dimers of the bacterial chromosome into monomers to permit their segregation at cell division. It also contributes to the segregational stability of plasmids. The sequence is that of Tyrosine recombinase XerC from Actinobacillus succinogenes (strain ATCC 55618 / DSM 22257 / CCUG 43843 / 130Z).